We begin with the raw amino-acid sequence, 105 residues long: uncharacterized protein (105 aa).

Helical transmembrane passes span 3-23 (ISPLIAGLIGGFTAAILQALF), 41-61 (DLVNWIINHLFGTTLGMALVS), and 63-83 (AFPVLTVVGIFIGALITTFIY).

It is found in the cell membrane. This is an uncharacterized protein from Methanocaldococcus jannaschii (strain ATCC 43067 / DSM 2661 / JAL-1 / JCM 10045 / NBRC 100440) (Methanococcus jannaschii).